Here is a 370-residue protein sequence, read N- to C-terminus: D-alanine--D-alanine ligase (370 aa).

The 209-residue stretch at 144–352 folds into the ATP-grasp domain; that stretch reads KKIFADAGIP…YGALIERLVD (209 aa). 177 to 232 lines the ATP pocket; it reads EEVLTYPVFVKPANLGSSVGISKATNKKELVDAMTEAFLYDRRVVVEQGVVAREIE. Mg(2+)-binding residues include aspartate 306, glutamate 319, and asparagine 321.

Belongs to the D-alanine--D-alanine ligase family. Mg(2+) is required as a cofactor. Mn(2+) serves as cofactor.

The protein localises to the cytoplasm. The catalysed reaction is 2 D-alanine + ATP = D-alanyl-D-alanine + ADP + phosphate + H(+). The protein operates within cell wall biogenesis; peptidoglycan biosynthesis. Its function is as follows. Cell wall formation. The chain is D-alanine--D-alanine ligase from Listeria monocytogenes serovar 1/2a (strain ATCC BAA-679 / EGD-e).